The following is an 84-amino-acid chain: MKTLLLTLVVVTIVCLDLGYTRKCLNTPLPLIYTTCPIGQDKCVKMTIKKLPSKYDVIRGCIDICPKSSADVEVLCCDTNKCNK.

The N-terminal stretch at Met-1–Thr-21 is a signal peptide. 4 disulfide bridges follow: Cys-24–Cys-43, Cys-36–Cys-61, Cys-65–Cys-76, and Cys-77–Cys-82.

The protein belongs to the three-finger toxin family. Short-chain subfamily. Aminergic toxin sub-subfamily. As to expression, expressed by the venom gland.

The protein localises to the secreted. Functionally, acts as a beta-blocker by binding to beta-1 and beta-2 adrenergic receptors (ADRB1 and ADRB2). It dose-dependently decreases the heart rate (bradycardia), whereas conventional cardiotoxins increases it. At 100 mg/kg, intraperitoneal injection into mice provokes labored breathing, impaired locomotion, lack of response to external stimuli, and death (after 30 minutes). This chain is Beta-cardiotoxin CTX27, found in Ophiophagus hannah (King cobra).